The primary structure comprises 337 residues: Viral cathepsin (337 aa).

The N-terminal stretch at 1–16 (MNKLLILFLLLNAALT) is a signal peptide. Residues 17–126 (RQDNHASANN…VVDGPAQRQR (110 aa)) constitute a propeptide, activation peptide. 3 disulfides stabilise this stretch: Cys147/Cys188, Cys181/Cys221, and Cys276/Cys324. Cys150 is a catalytic residue. Catalysis depends on residues His283 and Asn303.

The protein belongs to the peptidase C1 family. In terms of processing, synthesized as an inactive proenzyme and activated by proteolytic removal of the inhibitory propeptide.

It catalyses the reaction Endopeptidase of broad specificity, hydrolyzing substrates of both cathepsin L and cathepsin B.. Functionally, cysteine protease that plays an essential role in host liquefaction to facilitate horizontal transmission of the virus. May participate in the degradation of foreign protein expressed by the baculovirus system. The sequence is that of Viral cathepsin (VCATH) from Lepidoptera (butterflies and moths).